A 987-amino-acid chain; its full sequence is Mediator of RNA polymerase II transcription subunit 24 (987 aa).

6 short sequence motifs (LXXLL motif) span residues 128–132, 344–348, 446–450, 555–559, 786–790, and 855–859; these read LHWLL, LTPLL, LDLLL, LVALL, LPGLL, and LMRLL. Phosphoserine occurs at positions 860 and 871.

This sequence belongs to the Mediator complex subunit 24 family. In terms of assembly, component of the Mediator complex, which is composed of MED1, MED4, MED6, MED7, MED8, MED9, MED10, MED11, MED12, MED13, MED13L, MED14, MED15, MED16, MED17, MED18, MED19, MED20, MED21, MED22, MED23, MED24, MED25, MED26, MED27, MED29, MED30, MED31, CCNC, CDK8 and CDC2L6/CDK11. The MED12, MED13, CCNC and CDK8 subunits form a distinct module termed the CDK8 module. Mediator containing the CDK8 module is less active than Mediator lacking this module in supporting transcriptional activation. Individual preparations of the Mediator complex lacking one or more distinct subunits have been variously termed ARC, CRSP, DRIP, PC2, SMCC and TRAP. Interacts with AR. Interacts with MED1 and MED10. In terms of tissue distribution, expressed in the adrenal gland, brain, epididymis, heart, kidney, liver, ovary, pancreas, prostate, skeletal muscle, small intestine, spleen, stomach, testis and thymus.

It localises to the nucleus. In terms of biological role, component of the Mediator complex, a coactivator involved in the regulated transcription of nearly all RNA polymerase II-dependent genes. Mediator functions as a bridge to convey information from gene-specific regulatory proteins to the basal RNA polymerase II transcription machinery. Mediator is recruited to promoters by direct interactions with regulatory proteins and serves as a scaffold for the assembly of a functional preinitiation complex with RNA polymerase II and the general transcription factors. Required for basal and activator-dependent transcription. This is Mediator of RNA polymerase II transcription subunit 24 (Med24) from Mus musculus (Mouse).